We begin with the raw amino-acid sequence, 203 residues long: N-(5'-phosphoribosyl)anthranilate isomerase (203 aa).

The protein belongs to the TrpF family.

It catalyses the reaction N-(5-phospho-beta-D-ribosyl)anthranilate = 1-(2-carboxyphenylamino)-1-deoxy-D-ribulose 5-phosphate. Its pathway is amino-acid biosynthesis; L-tryptophan biosynthesis; L-tryptophan from chorismate: step 3/5. The protein is N-(5'-phosphoribosyl)anthranilate isomerase of Listeria innocua serovar 6a (strain ATCC BAA-680 / CLIP 11262).